The following is a 38-amino-acid chain: Kappa-theraphotoxin-Hm2a (38 aa).

3 cysteine pairs are disulfide-bonded: C2/C16, C9/C21, and C15/C32. Phenylalanine amide is present on F38.

Belongs to the neurotoxin 10 (Hwtx-1) family. 13 (Hntx-13) subfamily. In terms of tissue distribution, expressed by the venom gland.

The protein localises to the secreted. Its function is as follows. Inhibitor of voltage-gated potassium channels. It specifically inhibits Kv2.1/KCNB1 channels. In Heteroscodra maculata (Togo starburst tarantula), this protein is Kappa-theraphotoxin-Hm2a.